A 477-amino-acid chain; its full sequence is Calcium uptake protein 1, mitochondrial (477 aa).

The transit peptide at 1 to 33 (MFRLNALSALAELAVGSRWYHGTSQPTQTKRRL) directs the protein to the mitochondrion. The segment at 55–108 (AHAESPPSVNSKKTDAGDKGKSKDTREVSSHEGSAADTAAEPYPEEKKKKRSGF) is disordered. The segment covering 66–84 (KKTDAGDKGKSKDTREVSS) has biased composition (basic and acidic residues). The segment at 101 to 112 (KKKKRSGFRDRK) is polybasic region. Position 124 is a phosphoserine (Ser124). The k/R-ring stretch occupies residues 128–131 (KIFR). The region spanning 220-255 (TPQRNFEIAFKMFDLNGDGEVDMEEFEQVQSIIRSQ) is the EF-hand 1 domain. Ca(2+) contacts are provided by Asp233, Asn235, Asp237, Glu239, and Glu244. The k/R-ring stretch occupies residues 261 to 265 (RHRDR). The EF-hand 2; degenerate domain maps to 356 to 376 (KDGKGLTFQEVENFFTFLKNI). The EF-hand 3 domain maps to 410 to 445 (LSDHVCDVVFALFDCDGNGELSNKEFVSIMKQRLMR). Ca(2+)-binding residues include Asp423, Asp425, Asn427, Glu429, and Glu434. Arg457 bears the Asymmetric dimethylarginine mark. The segment at 457–467 (RLMQAMWKCAQ) is C-helix region.

Belongs to the MICU1 family. MICU1 subfamily. As to quaternary structure, heterodimer; disulfide-linked; heterodimerizes with MICU2 or MICU3. Homodimer; disulfide-linked. Component of the uniplex complex, composed of MCU, EMRE/SMDT1, MICU1 and MICU2 (or MICU3) in a 4:4:1:1 stoichiometry. The composition of calcium sensors within the uniplex complex can differ depending on tissues: a MICU1 homodimer can be present instead of the MICU1-MICU2 heterodimer in skeletal-muscle and kidney. MICU1 is recruited to the uniplex complex by EMRE/SMDT1, and it associates with MCU at low calcium levels, occluding the pore of the MCU channel. Associates with the MICOS complex. Interacts with SLC25A23. Interacts with CHCHD4/MIA40; which introduces the interchain disulfide bond with MICU2. Interacts (when methylated) with UCP2; leading to decrease the calcium sensitivity of MICU1. Phosphorylation at Ser-124 by AKT1 impairs its maturation and stability. Post-translationally, asymmetric dimethylation at Arg-457 by PRMT1 decreases the calcium sensitivity of MICU1 by promoting interaction with UCP2. In terms of processing, degraded by YME1L1 when not complexed as homodimer or heterodimer. Not degraded when complexed as homodimer or heterodimer; the presence of the interchain disulfide bond protecting MICU1 from degradation by YME1L1.

The protein resides in the mitochondrion intermembrane space. The protein localises to the mitochondrion inner membrane. Its function is as follows. Calcium sensor of the mitochondrial calcium uniporter (MCU) channel, which senses calcium level via its EF-hand domains. MICU1 and MICU2 (or MICU3) form a disulfide-linked heterodimer that stimulates and inhibits MCU activity, depending on the concentration of calcium. At low calcium levels, MICU1 occludes the pore of the MCU channel, preventing mitochondrial calcium uptake. At higher calcium levels, calcium-binding to MICU1 and MICU2 (or MICU3) induces a conformational change that weakens MCU-MICU1 interactions and moves the MICU1-MICU2 heterodimer away from the pore, allowing calcium permeation through the MCU channel. Also required to protect against manganese toxicity by preventing manganese uptake by MCU: mechanistically, manganese-binding to its EF-hand domains does not induce any conformational change, maintaining MCU pore occlusion. Acts as a regulator of mitochondrial cristae structure independently of its ability to regulate the mitochondrial calcium uniporter channel. Regulates glucose-dependent insulin secretion in pancreatic beta-cells by regulating mitochondrial calcium uptake. Induces T-helper 1-mediated autoreactivity, which is accompanied by the release of IFNG. The chain is Calcium uptake protein 1, mitochondrial (Micu1) from Rattus norvegicus (Rat).